The chain runs to 213 residues: Isopentenyl-diphosphate Delta-isomerase (213 aa).

The span at 1–10 (MRDSMSEADR) shows a compositional bias: basic and acidic residues. The tract at residues 1–34 (MRDSMSEADRSSPGSGKTDREDETAENATQDVIA) is disordered. Mn(2+) is bound by residues His51, His58, and His95. The region spanning 56-193 (VRHRAFTCLL…RQLRLCPWFE (138 aa)) is the Nudix hydrolase domain. Glu113 is a binding site for Mg(2+). Mn(2+) contacts are provided by Glu142 and Glu144. Glu144 is a catalytic residue.

Belongs to the IPP isomerase type 1 family. Mg(2+) serves as cofactor. It depends on Mn(2+) as a cofactor.

Its subcellular location is the cytoplasm. The enzyme catalyses isopentenyl diphosphate = dimethylallyl diphosphate. It participates in isoprenoid biosynthesis; dimethylallyl diphosphate biosynthesis; dimethylallyl diphosphate from isopentenyl diphosphate: step 1/1. Catalyzes the 1,3-allylic rearrangement of the homoallylic substrate isopentenyl (IPP) to its highly electrophilic allylic isomer, dimethylallyl diphosphate (DMAPP). This chain is Isopentenyl-diphosphate Delta-isomerase, found in Halobacterium salinarum (strain ATCC 700922 / JCM 11081 / NRC-1) (Halobacterium halobium).